A 400-amino-acid chain; its full sequence is Exodeoxyribonuclease 7 large subunit (400 aa).

Belongs to the XseA family. Heterooligomer composed of large and small subunits.

The protein resides in the cytoplasm. The enzyme catalyses Exonucleolytic cleavage in either 5'- to 3'- or 3'- to 5'-direction to yield nucleoside 5'-phosphates.. Its function is as follows. Bidirectionally degrades single-stranded DNA into large acid-insoluble oligonucleotides, which are then degraded further into small acid-soluble oligonucleotides. This Clostridium novyi (strain NT) protein is Exodeoxyribonuclease 7 large subunit.